The primary structure comprises 211 residues: Thiamine-phosphate synthase (211 aa).

Residues 37–41 (QLRIK) and Asn-69 each bind 4-amino-2-methyl-5-(diphosphooxymethyl)pyrimidine. The Mg(2+) site is built by Asp-70 and Asp-89. Residue Ser-108 coordinates 4-amino-2-methyl-5-(diphosphooxymethyl)pyrimidine. Residue 134 to 136 (TQT) coordinates 2-[(2R,5Z)-2-carboxy-4-methylthiazol-5(2H)-ylidene]ethyl phosphate. Lys-137 serves as a coordination point for 4-amino-2-methyl-5-(diphosphooxymethyl)pyrimidine. 2-[(2R,5Z)-2-carboxy-4-methylthiazol-5(2H)-ylidene]ethyl phosphate is bound by residues Gly-166 and 186–187 (VS).

This sequence belongs to the thiamine-phosphate synthase family. Mg(2+) is required as a cofactor.

It catalyses the reaction 2-[(2R,5Z)-2-carboxy-4-methylthiazol-5(2H)-ylidene]ethyl phosphate + 4-amino-2-methyl-5-(diphosphooxymethyl)pyrimidine + 2 H(+) = thiamine phosphate + CO2 + diphosphate. The catalysed reaction is 2-(2-carboxy-4-methylthiazol-5-yl)ethyl phosphate + 4-amino-2-methyl-5-(diphosphooxymethyl)pyrimidine + 2 H(+) = thiamine phosphate + CO2 + diphosphate. The enzyme catalyses 4-methyl-5-(2-phosphooxyethyl)-thiazole + 4-amino-2-methyl-5-(diphosphooxymethyl)pyrimidine + H(+) = thiamine phosphate + diphosphate. It functions in the pathway cofactor biosynthesis; thiamine diphosphate biosynthesis; thiamine phosphate from 4-amino-2-methyl-5-diphosphomethylpyrimidine and 4-methyl-5-(2-phosphoethyl)-thiazole: step 1/1. Functionally, condenses 4-methyl-5-(beta-hydroxyethyl)thiazole monophosphate (THZ-P) and 2-methyl-4-amino-5-hydroxymethyl pyrimidine pyrophosphate (HMP-PP) to form thiamine monophosphate (TMP). In Salmonella paratyphi A (strain ATCC 9150 / SARB42), this protein is Thiamine-phosphate synthase.